Here is a 418-residue protein sequence, read N- to C-terminus: Glutamyl-tRNA reductase (418 aa).

Residues 49 to 52 (TCNR), S109, 114 to 116 (EPQ), and Q120 each bind substrate. The Nucleophile role is filled by C50. An NADP(+)-binding site is contributed by 189–194 (GAGETI).

The protein belongs to the glutamyl-tRNA reductase family. In terms of assembly, homodimer.

The enzyme catalyses (S)-4-amino-5-oxopentanoate + tRNA(Glu) + NADP(+) = L-glutamyl-tRNA(Glu) + NADPH + H(+). Its pathway is porphyrin-containing compound metabolism; protoporphyrin-IX biosynthesis; 5-aminolevulinate from L-glutamyl-tRNA(Glu): step 1/2. Catalyzes the NADPH-dependent reduction of glutamyl-tRNA(Glu) to glutamate 1-semialdehyde (GSA). The protein is Glutamyl-tRNA reductase of Escherichia coli O6:K15:H31 (strain 536 / UPEC).